Consider the following 206-residue polypeptide: Ras-related protein Rab-18 (206 aa).

M1 is subject to N-acetylmethionine. GTP contacts are provided by S17, G20, K21, S22, S23, D34, P35, T40, G66, K123, and D125. S22 contacts Mg(2+). 2 consecutive short sequence motifs (switch) follow at residues 31–45 (DTFDPELAATIGVDF) and 63–80 (DTAGQERFRTLTPSYYRG). T40 contributes to the Mg(2+) binding site. The residue at position 144 (S144) is a Phosphoserine. A GTP-binding site is contributed by A152. C199 carries S-palmitoyl cysteine lipidation. Residue C203 is modified to Cysteine methyl ester. C203 is lipidated: S-geranylgeranyl cysteine. The propeptide at 204-206 (SVL) is removed in mature form.

It belongs to the small GTPase superfamily. Rab family. As to quaternary structure, interacts (in GTP-bound form) with ZFYVE1. Interacts with ZW10 and this interaction is enhanced in the presence of ZFYVE1. Interacts with BSCL2. It depends on Mg(2+) as a cofactor.

Its subcellular location is the endoplasmic reticulum membrane. The protein localises to the golgi apparatus. It is found in the cis-Golgi network membrane. It localises to the lipid droplet. The protein resides in the apical cell membrane. The catalysed reaction is GTP + H2O = GDP + phosphate + H(+). Its activity is regulated as follows. Regulated by guanine nucleotide exchange factors (GEFs) which promote the exchange of bound GDP for free GTP. Regulated by GTPase activating proteins (GAPs) which increase the GTP hydrolysis activity at the ER membrane. Inhibited by GDP dissociation inhibitors (GDIs) which prevent Rab-GDP dissociation. Its function is as follows. The small GTPases Rab are key regulators of intracellular membrane trafficking, from the formation of transport vesicles to their fusion with membranes. Rabs cycle between an inactive GDP-bound form and an active GTP-bound form that is able to recruit to membranes different sets of downstream effectors directly responsible for vesicle formation, movement, tethering and fusion. RAB18 is required for the localization of ZFYVE1 to lipid droplets and for its function in mediating the formation of endoplasmic reticulum-lipid droplets (ER-LD) contacts. Also required for maintaining endoplasmic reticulum structure. Plays a role in apical endocytosis/recycling. Plays a key role in eye and brain development and neurodegeneration. The chain is Ras-related protein Rab-18 from Rattus norvegicus (Rat).